A 312-amino-acid polypeptide reads, in one-letter code: tRNA-cytidine(32) 2-sulfurtransferase (312 aa).

A PP-loop motif motif is present at residues 39-44 (SGGKDS). Residues C114, C117, and C205 each contribute to the [4Fe-4S] cluster site.

Belongs to the TtcA family. As to quaternary structure, homodimer. The cofactor is Mg(2+). [4Fe-4S] cluster serves as cofactor.

Its subcellular location is the cytoplasm. The enzyme catalyses cytidine(32) in tRNA + S-sulfanyl-L-cysteinyl-[cysteine desulfurase] + AH2 + ATP = 2-thiocytidine(32) in tRNA + L-cysteinyl-[cysteine desulfurase] + A + AMP + diphosphate + H(+). It functions in the pathway tRNA modification. In terms of biological role, catalyzes the ATP-dependent 2-thiolation of cytidine in position 32 of tRNA, to form 2-thiocytidine (s(2)C32). The sulfur atoms are provided by the cysteine/cysteine desulfurase (IscS) system. In Ralstonia nicotianae (strain ATCC BAA-1114 / GMI1000) (Ralstonia solanacearum), this protein is tRNA-cytidine(32) 2-sulfurtransferase.